The sequence spans 402 residues: Acyl-[acyl-carrier-protein] desaturase 3, chloroplastic (402 aa).

2 disordered regions span residues 1–25 and 38–66; these read MSLT…GGAS and VGGI…THTL. The transit peptide at 1-32 directs the protein to the chloroplast; sequence MSLTGCLPPRPPCSMRRRTSGGGASVSPVVVM. Residues Glu-139, Glu-178, His-181, Glu-231, Glu-264, and His-267 each coordinate Fe cation.

The protein belongs to the fatty acid desaturase type 2 family. Homodimer. The cofactor is Fe(2+).

The protein resides in the plastid. It localises to the chloroplast. Its pathway is lipid metabolism; fatty acid metabolism. Functionally, introduces a cis double bond in the acyl chain of an acyl-[acyl-carrier protein]. The protein is Acyl-[acyl-carrier-protein] desaturase 3, chloroplastic of Oryza sativa subsp. indica (Rice).